The primary structure comprises 463 residues: uncharacterized protein (463 aa).

The next 12 membrane-spanning stretches (helical) occupy residues isoleucine 17 to alanine 37, leucine 40 to methionine 60, tryptophan 97 to phenylalanine 117, valine 122 to alanine 142, phenylalanine 153 to isoleucine 173, glycine 201 to valine 221, isoleucine 244 to isoleucine 264, valine 278 to serine 298, alanine 335 to alanine 355, valine 357 to leucine 377, leucine 401 to alanine 421, and alanine 429 to phenylalanine 449.

The protein belongs to the amino acid-polyamine-organocation (APC) superfamily.

It localises to the cell membrane. This is an uncharacterized protein from Bacillus subtilis (strain 168).